Reading from the N-terminus, the 497-residue chain is Guanosine-5'-triphosphate,3'-diphosphate pyrophosphatase (497 aa).

Belongs to the GppA/Ppx family. GppA subfamily.

The catalysed reaction is guanosine 3'-diphosphate 5'-triphosphate + H2O = guanosine 3',5'-bis(diphosphate) + phosphate + H(+). It participates in purine metabolism; ppGpp biosynthesis; ppGpp from GTP: step 2/2. In terms of biological role, catalyzes the conversion of pppGpp to ppGpp. Guanosine pentaphosphate (pppGpp) is a cytoplasmic signaling molecule which together with ppGpp controls the 'stringent response', an adaptive process that allows bacteria to respond to amino acid starvation, resulting in the coordinated regulation of numerous cellular activities. The sequence is that of Guanosine-5'-triphosphate,3'-diphosphate pyrophosphatase from Aliivibrio fischeri (strain MJ11) (Vibrio fischeri).